We begin with the raw amino-acid sequence, 304 residues long: Putative S-adenosyl-L-methionine-dependent methyltransferase MAV_1058 (304 aa).

S-adenosyl-L-methionine contacts are provided by residues D128 and 157–158 (DL).

The protein belongs to the UPF0677 family.

Exhibits S-adenosyl-L-methionine-dependent methyltransferase activity. In Mycobacterium avium (strain 104), this protein is Putative S-adenosyl-L-methionine-dependent methyltransferase MAV_1058.